The following is a 469-amino-acid chain: Neuraminidase (469 aa).

The Intravirion portion of the chain corresponds to 1–6 (MNPNQK). The helical transmembrane segment at 7-29 (IITIGSVSLTIATICFLMQIAIQ) threads the bilayer. The involved in apical transport and lipid raft association stretch occupies residues 11 to 33 (GSVSLTIATICFLMQIAIQVTTV). Residues 30-469 (VTTVTLHFKQ…DGADINLMPI (440 aa)) are Virion surface-facing. A hypervariable stalk region region spans residues 36–88 (HFKQYECDSPANNQVMPCEPIIIERNITEIVYLTNTTIEKEICPKLVEYRNWS). 3 N-linked (GlcNAc...) asparagine; by host glycosylation sites follow: N61, N70, and N86. The head of neuraminidase stretch occupies residues 91–469 (QCKITGFAPF…DGADINLMPI (379 aa)). 8 cysteine pairs are disulfide-bonded: C92–C417, C124–C129, C183–C230, C232–C237, C278–C291, C280–C289, C318–C337, and C421–C447. A substrate-binding site is contributed by R118. N-linked (GlcNAc...) asparagine; by host glycosylation is present at N146. The active-site Proton donor/acceptor is the D151. R152 is a substrate binding site. N-linked (GlcNAc...) asparagine; by host glycans are attached at residues N200 and N234. 276-277 (EE) is a binding site for substrate. R292 contributes to the substrate binding site. The Ca(2+) site is built by D293, G297, and D324. R371 contacts substrate. N402 carries an N-linked (GlcNAc...) asparagine; by host glycan. The Nucleophile role is filled by Y406.

It belongs to the glycosyl hydrolase 34 family. In terms of assembly, homotetramer. It depends on Ca(2+) as a cofactor. N-glycosylated.

Its subcellular location is the virion membrane. It is found in the host apical cell membrane. The catalysed reaction is Hydrolysis of alpha-(2-&gt;3)-, alpha-(2-&gt;6)-, alpha-(2-&gt;8)- glycosidic linkages of terminal sialic acid residues in oligosaccharides, glycoproteins, glycolipids, colominic acid and synthetic substrates.. With respect to regulation, inhibited by the neuraminidase inhibitors zanamivir (Relenza) and oseltamivir (Tamiflu). These drugs interfere with the release of progeny virus from infected cells and are effective against all influenza strains. Resistance to neuraminidase inhibitors is quite rare. Its function is as follows. Catalyzes the removal of terminal sialic acid residues from viral and cellular glycoconjugates. Cleaves off the terminal sialic acids on the glycosylated HA during virus budding to facilitate virus release. Additionally helps virus spread through the circulation by further removing sialic acids from the cell surface. These cleavages prevent self-aggregation and ensure the efficient spread of the progeny virus from cell to cell. Otherwise, infection would be limited to one round of replication. Described as a receptor-destroying enzyme because it cleaves a terminal sialic acid from the cellular receptors. May facilitate viral invasion of the upper airways by cleaving the sialic acid moieties on the mucin of the airway epithelial cells. Likely to plays a role in the budding process through its association with lipid rafts during intracellular transport. May additionally display a raft-association independent effect on budding. Plays a role in the determination of host range restriction on replication and virulence. Sialidase activity in late endosome/lysosome traffic seems to enhance virus replication. In Aves (whales), this protein is Neuraminidase.